The sequence spans 3371 residues: Abnormal spindle-like microcephaly-associated protein homolog (3371 aa).

5 positions are modified to phosphoserine: Ser-212, Ser-215, Ser-300, Ser-325, and Ser-540. A disordered region spans residues 536–559 (RPHFSPVESKTSTVKHTKKVVTSS). A Calponin-homology (CH) 1 domain is found at 852–988 (KASKEILLAF…LLWKIALAFQ (137 aa)). The stretch at 989–1014 (VDISLNLDQLKEEIDFLKNTQSMKKT) forms a coiled coil. Position 1035 is a phosphoserine (Ser-1035). In terms of domain architecture, Calponin-homology (CH) 2 spans 1042 to 1193 (SESVKLLMDW…YLSFLCARLL (152 aa)). IQ domains lie at 1198–1227 (ETRA…RDKA), 1396–1427 (EERA…IIIQ), 1469–1500 (KRAA…VLQS), 1564–1593 (TRSA…SIVK), 1587–1616 (ILTS…ATVK), 1610–1639 (LKKA…IAQQ), 1644–1673 (RRAS…AAVS), 1667–1698 (QRKA…VVIQ), 1717–1746 (VRRA…AALK), 1740–1769 (QSAA…SALK), 1790–1819 (TRTA…AAVK), 1813–1844 (EHEA…SVIQ), 1863–1894 (LRRA…IIIQ), 1886–1917 (QQRC…HLIQ), 1936–1965 (TKXA…AAAT), 1959–1990 (MHQA…VIIQ), 2009–2040 (VKKA…TLIK), 2032–2063 (MHMA…IIIQ), 2082–2113 (ILKA…TLIQ), 2105–2134 (MRTA…VTKT), 2155–2186 (LRRS…AVIQ), 2227–2258 (LQKA…TVLQ), 2250–2281 (MRRA…QVIQ), 2300–2331 (QRHS…TLIQ), 2323–2354 (MHAS…VFVQ), 2396–2427 (MHRA…VLIQ), 2446–2477 (WRHS…VIIQ), 2539–2570 (RHQA…VFVQ), 2580–2609 (RTQA…AATR), 2603–2634 (MHLA…VVIQ), 2653–2682 (IQKS…KKMA), 2729–2760 (QRKA…RIQS), 2751–2780 (QRRA…AALT), 2824–2853 (IRSS…STIK), 2847–2878 (LKDS…RIQA), 2869–2900 (EVKA…RIIQ), 2944–2973 (RHQA…AALT), 2994–3025 (LKKS…RLLH), 3096–3125 (HSRA…RIAK), and 3119–3150 (FNKR…IRQR).

The protein resides in the cytoplasm. The protein localises to the cytoskeleton. Its subcellular location is the spindle. It localises to the nucleus. In terms of biological role, probable role in mitotic spindle regulation and coordination of mitotic processes. May have a preferential role in regulating neurogenesis. The polypeptide is Abnormal spindle-like microcephaly-associated protein homolog (ASPM) (Bos taurus (Bovine)).